We begin with the raw amino-acid sequence, 159 residues long: MNIKIIGVGKLKEKYFKAGIAEYAKRLGRYCKFEIVEVPDEKAPESLSQAEMDEVMAKEGERILDKIKDREYVYALAIKGKERSSEEFAKEINKLTTYGHSDITFVIGGSLGLSPAVLKRADAQISFGRFTLPHQLMRLVLSEQIYRAFTIINGLPYHK.

S-adenosyl-L-methionine-binding residues include L76 and G108.

It belongs to the RNA methyltransferase RlmH family. As to quaternary structure, homodimer.

The protein resides in the cytoplasm. It catalyses the reaction pseudouridine(1915) in 23S rRNA + S-adenosyl-L-methionine = N(3)-methylpseudouridine(1915) in 23S rRNA + S-adenosyl-L-homocysteine + H(+). Its function is as follows. Specifically methylates the pseudouridine at position 1915 (m3Psi1915) in 23S rRNA. The chain is Ribosomal RNA large subunit methyltransferase H from Limosilactobacillus reuteri (strain DSM 20016) (Lactobacillus reuteri).